The sequence spans 413 residues: Serine hydroxymethyltransferase (413 aa).

(6S)-5,6,7,8-tetrahydrofolate contacts are provided by residues leucine 117 and glycine 121–leucine 123. At lysine 226 the chain carries N6-(pyridoxal phosphate)lysine. (6S)-5,6,7,8-tetrahydrofolate contacts are provided by residues glutamate 239 and serine 349–phenylalanine 351.

This sequence belongs to the SHMT family. Homodimer. It depends on pyridoxal 5'-phosphate as a cofactor.

The protein resides in the cytoplasm. It carries out the reaction (6R)-5,10-methylene-5,6,7,8-tetrahydrofolate + glycine + H2O = (6S)-5,6,7,8-tetrahydrofolate + L-serine. It functions in the pathway one-carbon metabolism; tetrahydrofolate interconversion. The protein operates within amino-acid biosynthesis; glycine biosynthesis; glycine from L-serine: step 1/1. Functionally, catalyzes the reversible interconversion of serine and glycine with tetrahydrofolate (THF) serving as the one-carbon carrier. This reaction serves as the major source of one-carbon groups required for the biosynthesis of purines, thymidylate, methionine, and other important biomolecules. Also exhibits THF-independent aldolase activity toward beta-hydroxyamino acids, producing glycine and aldehydes, via a retro-aldol mechanism. This chain is Serine hydroxymethyltransferase, found in Bacillus cereus (strain AH187).